The sequence spans 1364 residues: Pleckstrin homology domain-containing family H member 1 (1364 aa).

The stretch at 28–169 forms a coiled coil; it reads FRLQASKIRE…VGSLQDALEA (142 aa). 5 disordered regions span residues 184–266, 296–321, 356–395, 487–529, and 546–568; these read GAAE…SPPH, GTKT…PGTP, LHPS…ESPK, PFMD…IKRG, and DACS…SSYS. Positions 237 to 246 are enriched in polar residues; sequence EDSSSSTVHS. Basic and acidic residues predominate over residues 364-379; that stretch reads LESRARSREEPEKMEM. The span at 509 to 520 shows a compositional bias: polar residues; the sequence is VPSSESRKTSGL. PH domains are found at residues 578 to 672 and 687 to 796; these read SLEK…SLLK and KPTV…VAAG. Phosphoserine is present on S745. The region spanning 832–986 is the MyTH4 domain; that stretch reads YSKDGLYASL…PSRMEVVSIL (155 aa). One can recognise an FERM domain in the interval 997–1333; it reads FSIPVHFTNG…NHCTTTVNPP (337 aa).

In Homo sapiens (Human), this protein is Pleckstrin homology domain-containing family H member 1 (PLEKHH1).